A 922-amino-acid polypeptide reads, in one-letter code: Pyruvate dehydrogenase E1 component (922 aa).

Homodimer. Part of an unusual ODH/PDH supercomplex, consisting of AceE (E1), AceF (E2), and Lpd (E3) together with OdhA (E1+E2). Mg(2+) is required as a cofactor. It depends on thiamine diphosphate as a cofactor.

It carries out the reaction N(6)-[(R)-lipoyl]-L-lysyl-[protein] + pyruvate + H(+) = N(6)-[(R)-S(8)-acetyldihydrolipoyl]-L-lysyl-[protein] + CO2. Its function is as follows. Is a specific component of the pyruvate dehydrogenase (PDH) complex, that catalyzes the overall conversion of pyruvate to acetyl-CoA and CO(2). AceE has reductase activity with pyruvate but does not react with 2-oxoglutarate. In Corynebacterium glutamicum (strain ATCC 13032 / DSM 20300 / JCM 1318 / BCRC 11384 / CCUG 27702 / LMG 3730 / NBRC 12168 / NCIMB 10025 / NRRL B-2784 / 534), this protein is Pyruvate dehydrogenase E1 component (aceE).